A 183-amino-acid polypeptide reads, in one-letter code: Photosystem I assembly protein Ycf3 (183 aa).

TPR repeat units follow at residues 35–68 (AFIY…EIDS), 72–105 (SYIL…NSFL), and 120–153 (GEQA…SPDN).

It belongs to the Ycf3 family.

The protein resides in the plastid. The protein localises to the chloroplast thylakoid membrane. Its function is as follows. Essential for the assembly of the photosystem I (PSI) complex. May act as a chaperone-like factor to guide the assembly of the PSI subunits. This chain is Photosystem I assembly protein Ycf3, found in Adiantum capillus-veneris (Maidenhair fern).